The primary structure comprises 773 residues: Polyribonucleotide nucleotidyltransferase (773 aa).

Residues aspartate 532 and aspartate 538 each contribute to the Mg(2+) site. Residues 598–657 (PRVITIKVPVDKIGEVIGPKGKVINAITEETGAQISIEDDGTVFVGATDGLSAQAAINKI) form the KH domain. In terms of domain architecture, S1 motif spans 669-738 (GERFLGTVVK…KRGKISLVLV (70 aa)). The disordered stretch occupies residues 749-773 (APADAGAAQEFGSGTAPADAATASS).

It belongs to the polyribonucleotide nucleotidyltransferase family. Requires Mg(2+) as cofactor.

Its subcellular location is the cytoplasm. It carries out the reaction RNA(n+1) + phosphate = RNA(n) + a ribonucleoside 5'-diphosphate. Involved in mRNA degradation. Catalyzes the phosphorolysis of single-stranded polyribonucleotides processively in the 3'- to 5'-direction. The sequence is that of Polyribonucleotide nucleotidyltransferase from Mycobacterium leprae (strain Br4923).